The sequence spans 159 residues: Large ribosomal subunit protein uL11 (159 aa).

The tract at residues 1-26 (MAGTIEVLVPGGKANPGPPLGPELGP) is disordered.

Belongs to the universal ribosomal protein uL11 family. As to quaternary structure, part of the ribosomal stalk of the 50S ribosomal subunit. Interacts with L10 and the large rRNA to form the base of the stalk. L10 forms an elongated spine to which L12 dimers bind in a sequential fashion forming a multimeric L10(L12)X complex.

Functionally, forms part of the ribosomal stalk which helps the ribosome interact with GTP-bound translation factors. This is Large ribosomal subunit protein uL11 from Haloferax volcanii (strain ATCC 29605 / DSM 3757 / JCM 8879 / NBRC 14742 / NCIMB 2012 / VKM B-1768 / DS2) (Halobacterium volcanii).